We begin with the raw amino-acid sequence, 510 residues long: NAD(P)H-quinone oxidoreductase subunit 2 B, chloroplastic (510 aa).

The next 13 membrane-spanning stretches (helical) occupy residues 24-44 (LLLFDGSFIFPECILIFGLIL), 57-77 (IPWLYFISSTSLVMSITALLF), 99-119 (IFQFLILLCSTLCIPLSVEYI), 124-144 (MAIAEFLLFVLTATLGGMFLC), 149-169 (LITIFVAPECFSLCSYLLSGY), 183-203 (YLLMGGASSSILVHGFSWLYG), 227-247 (PGISIALIFITVGIGFKLSPA), 295-315 (WHLLLEILAILSMILGNLIAI), 323-343 (MLAYSSIGQIGYVIIGIIVGD), 354-374 (YMLFYISMNLGTFACIVLFGL), 395-415 (ALSLALCLLSLGGLPPLAGFF), 418-438 (LHLFWCGWQAGLYFLVSIGLL), and 484-504 (MIVCVIASTIPGISMNPIIAI).

Belongs to the complex I subunit 2 family. In terms of assembly, NDH is composed of at least 16 different subunits, 5 of which are encoded in the nucleus.

The protein localises to the plastid. Its subcellular location is the chloroplast thylakoid membrane. The enzyme catalyses a plastoquinone + NADH + (n+1) H(+)(in) = a plastoquinol + NAD(+) + n H(+)(out). It carries out the reaction a plastoquinone + NADPH + (n+1) H(+)(in) = a plastoquinol + NADP(+) + n H(+)(out). Its function is as follows. NDH shuttles electrons from NAD(P)H:plastoquinone, via FMN and iron-sulfur (Fe-S) centers, to quinones in the photosynthetic chain and possibly in a chloroplast respiratory chain. The immediate electron acceptor for the enzyme in this species is believed to be plastoquinone. Couples the redox reaction to proton translocation, and thus conserves the redox energy in a proton gradient. The polypeptide is NAD(P)H-quinone oxidoreductase subunit 2 B, chloroplastic (Gossypium hirsutum (Upland cotton)).